We begin with the raw amino-acid sequence, 401 residues long: Phosphoglycerate kinase (401 aa).

Substrate is bound by residues 21–23 (DFN), Arg36, 59–62 (HLGR), Arg119, and Arg160. Residues Lys212, Glu330, and 357–360 (GGDS) contribute to the ATP site.

It belongs to the phosphoglycerate kinase family. As to quaternary structure, monomer.

It localises to the cytoplasm. It catalyses the reaction (2R)-3-phosphoglycerate + ATP = (2R)-3-phospho-glyceroyl phosphate + ADP. The protein operates within carbohydrate degradation; glycolysis; pyruvate from D-glyceraldehyde 3-phosphate: step 2/5. The protein is Phosphoglycerate kinase of Limosilactobacillus reuteri subsp. reuteri (strain JCM 1112) (Lactobacillus reuteri).